Here is a 234-residue protein sequence, read N- to C-terminus: Endonuclease V (234 aa).

Mg(2+)-binding residues include Asp36 and Asp104.

This sequence belongs to the endonuclease V family. Requires Mg(2+) as cofactor.

Its subcellular location is the cytoplasm. It catalyses the reaction Endonucleolytic cleavage at apurinic or apyrimidinic sites to products with a 5'-phosphate.. In terms of biological role, DNA repair enzyme involved in the repair of deaminated bases. Selectively cleaves double-stranded DNA at the second phosphodiester bond 3' to a deoxyinosine leaving behind the intact lesion on the nicked DNA. In Yersinia enterocolitica serotype O:8 / biotype 1B (strain NCTC 13174 / 8081), this protein is Endonuclease V.